An 86-amino-acid polypeptide reads, in one-letter code: Small ribosomal subunit protein uS17 (86 aa).

The protein belongs to the universal ribosomal protein uS17 family. In terms of assembly, part of the 30S ribosomal subunit.

In terms of biological role, one of the primary rRNA binding proteins, it binds specifically to the 5'-end of 16S ribosomal RNA. This Chlamydia pneumoniae (Chlamydophila pneumoniae) protein is Small ribosomal subunit protein uS17.